The chain runs to 838 residues: Translation initiation factor IF-2 (838 aa).

A disordered region spans residues 50–108 (VQSGKKPESPEKKDIKQNTQKEAPETQTQQKPIEQEVETKQNIDSTPIKVEPKQESLAS). Over residues 54-65 (KKPESPEKKDIK) the composition is skewed to basic and acidic residues. The span at 66–81 (QNTQKEAPETQTQQKP) shows a compositional bias: polar residues. One can recognise a tr-type G domain in the interval 337-506 (SRAPVVTIMG…LLQAELLELK (170 aa)). A G1 region spans residues 346–353 (GHVDHGKT). 346–353 (GHVDHGKT) is a GTP binding site. The interval 371–375 (GITQH) is G2. The interval 392-395 (DTPG) is G3. Residues 392–396 (DTPGH) and 446–449 (NKMD) each bind GTP. A G4 region spans residues 446–449 (NKMD). Positions 482–484 (SAK) are G5.

It belongs to the TRAFAC class translation factor GTPase superfamily. Classic translation factor GTPase family. IF-2 subfamily.

It is found in the cytoplasm. In terms of biological role, one of the essential components for the initiation of protein synthesis. Protects formylmethionyl-tRNA from spontaneous hydrolysis and promotes its binding to the 30S ribosomal subunits. Also involved in the hydrolysis of GTP during the formation of the 70S ribosomal complex. The polypeptide is Translation initiation factor IF-2 (Campylobacter fetus subsp. fetus (strain 82-40)).